Consider the following 498-residue polypeptide: Mitogen-activated protein kinase 15 (498 aa).

One can recognise a Protein kinase domain in the interval 13 to 304 (YKIEEVIGKG…AEEALADPYF (292 aa)). Residues 19-27 (IGKGSYGVV) and Lys42 each bind ATP. Catalysis depends on Asp139, which acts as the Proton acceptor. Thr175 bears the Phosphothreonine mark. Residues 175–177 (TDY) carry the TXY motif. Tyr177 is subject to Phosphotyrosine. Disordered regions lie at residues 388-411 (STAAPPERQHNSLPRPSVLYSDDR) and 470-498 (STAEQYEHRRTDRNPALATNTVSPRGSYP). Polar residues predominate over residues 486 to 498 (LATNTVSPRGSYP).

The protein belongs to the protein kinase superfamily. CMGC Ser/Thr protein kinase family. MAP kinase subfamily. Dually phosphorylated on Thr-175 and Tyr-177, which activates the enzyme.

It catalyses the reaction L-seryl-[protein] + ATP = O-phospho-L-seryl-[protein] + ADP + H(+). The catalysed reaction is L-threonyl-[protein] + ATP = O-phospho-L-threonyl-[protein] + ADP + H(+). With respect to regulation, activated by threonine and tyrosine phosphorylation. In Oryza sativa subsp. japonica (Rice), this protein is Mitogen-activated protein kinase 15 (MPK15).